The following is a 552-amino-acid chain: CTP synthase (552 aa).

Residues 1–270 are amidoligase domain; it reads MTKFVFVTGG…DGLICDKLRL (270 aa). A CTP-binding site is contributed by Ser13. Ser13 lines the UTP pocket. ATP-binding positions include 14–19 and Asp71; that span reads SLGKGI. 2 residues coordinate Mg(2+): Asp71 and Glu144. Residues 151–153, 191–196, and Lys227 each bind CTP; these read DIE and KTKPTQ. Residues 191–196 and Lys227 each bind UTP; that span reads KTKPTQ. Residues 295-548 enclose the Glutamine amidotransferase type-1 domain; sequence QIAMVGKYVE…IKAAVEHQKP (254 aa). L-glutamine is bound at residue Gly357. Catalysis depends on Cys384, which acts as the Nucleophile; for glutamine hydrolysis. L-glutamine-binding positions include 385–388, Glu408, and Arg474; that span reads LGMQ. Active-site residues include His521 and Glu523.

This sequence belongs to the CTP synthase family. As to quaternary structure, homotetramer.

It carries out the reaction UTP + L-glutamine + ATP + H2O = CTP + L-glutamate + ADP + phosphate + 2 H(+). The catalysed reaction is L-glutamine + H2O = L-glutamate + NH4(+). The enzyme catalyses UTP + NH4(+) + ATP = CTP + ADP + phosphate + 2 H(+). It functions in the pathway pyrimidine metabolism; CTP biosynthesis via de novo pathway; CTP from UDP: step 2/2. Its activity is regulated as follows. Allosterically activated by GTP, when glutamine is the substrate; GTP has no effect on the reaction when ammonia is the substrate. The allosteric effector GTP functions by stabilizing the protein conformation that binds the tetrahedral intermediate(s) formed during glutamine hydrolysis. Inhibited by the product CTP, via allosteric rather than competitive inhibition. Functionally, catalyzes the ATP-dependent amination of UTP to CTP with either L-glutamine or ammonia as the source of nitrogen. Regulates intracellular CTP levels through interactions with the four ribonucleotide triphosphates. In Acidovorax ebreus (strain TPSY) (Diaphorobacter sp. (strain TPSY)), this protein is CTP synthase.